Consider the following 277-residue polypeptide: Putative phosphoenolpyruvate synthase regulatory protein (277 aa).

157–164 (GVSRSGKT) provides a ligand contact to ADP.

Belongs to the pyruvate, phosphate/water dikinase regulatory protein family. PSRP subfamily.

It carries out the reaction [pyruvate, water dikinase] + ADP = [pyruvate, water dikinase]-phosphate + AMP + H(+). It catalyses the reaction [pyruvate, water dikinase]-phosphate + phosphate + H(+) = [pyruvate, water dikinase] + diphosphate. Functionally, bifunctional serine/threonine kinase and phosphorylase involved in the regulation of the phosphoenolpyruvate synthase (PEPS) by catalyzing its phosphorylation/dephosphorylation. This chain is Putative phosphoenolpyruvate synthase regulatory protein, found in Azoarcus sp. (strain BH72).